The sequence spans 430 residues: ETS domain-containing protein Elk-4 (430 aa).

A DNA-binding region (ETS) is located at residues 5–85 (ITLWQFLLQL…NGQKFVYKFV (81 aa)). The span at 116–127 (SKDVEYGGKERP) shows a compositional bias: basic and acidic residues. The interval 116 to 138 (SKDVEYGGKERPPQPGAKTSSRN) is disordered. K166 is covalently cross-linked (Glycyl lysine isopeptide (Lys-Gly) (interchain with G-Cter in SUMO2)). 2 disordered regions span residues 245–279 (TTFN…DIDT) and 292–325 (PENL…KGLE). Pro residues predominate over residues 249–272 (PTPPVPSTPLPLKEPPRTPSPPLS). Positions 299–312 (PKNEDSALPEKDKT) are enriched in basic and acidic residues.

This sequence belongs to the ETS family. As to quaternary structure, interacts with SIRT7. As to expression, lung and liver.

Its subcellular location is the nucleus. Functionally, involved in both transcriptional activation and repression. Interaction with SIRT7 leads to recruitment and stabilization of SIRT7 at promoters, followed by deacetylation of histone H3 at 'Lys-18' (H3K18Ac) and subsequent transcription repression. Forms a ternary complex with the serum response factor (SRF). Requires DNA-bound SRF for ternary complex formation and makes extensive DNA contacts to the 5'side of SRF, but does not bind DNA autonomously. This Mus musculus (Mouse) protein is ETS domain-containing protein Elk-4 (Elk4).